The sequence spans 90 residues: Probable Fe(2+)-trafficking protein (90 aa).

This sequence belongs to the Fe(2+)-trafficking protein family.

Functionally, could be a mediator in iron transactions between iron acquisition and iron-requiring processes, such as synthesis and/or repair of Fe-S clusters in biosynthetic enzymes. This chain is Probable Fe(2+)-trafficking protein, found in Pseudomonas fluorescens (strain ATCC BAA-477 / NRRL B-23932 / Pf-5).